We begin with the raw amino-acid sequence, 907 residues long: MPYIFAFFCTGFLGAVVGANFPNNIQIGGLFPNQQSQEHAAFRFALSQLTEPPKLLPQIDIVNISDSFEMTYRFCSQFSKGVYAIFGFYERRTVNMLTSFCGALHVCFITPSFPVDTSNQFVLQLRPELQEALISIIDHYKWQTFVYIYDADRGLSVLQRVLDTAAEKNWQVTAVNILTTTEEGYRMLFQDLEKKKERLVVVDCESERLNAILGQIVKLEKNGIGYHYILANLGFMDIDLNKFKESGANVTGFQLVNYTDTIPARIMQQWRTSDARDHTRVDWKRPKYTSALTYDGVKVMAEAFQSLRRQRIDISRRGNAGDCLANPAVPWGQGIDIQRALQQVRFEGLTGNVQFNEKGRRTNYTLHVIEMKHDGIRKIGYWNEDDKFVPAATDAQAGGDNSSVQNRTYIVTTILEDPYVMLKKNANQFEGNDRYEGYCVELAAEIAKHVGYSYRLEIVSDGKYGARDPDTKAWNGMVGELVYGRADVAVAPLTITLVREEVIDFSKPFMSLGISIMIKKPQKSKPGVFSFLDPLAYEIWMCIVFAYIGVSVVLFLVSRFSPYEWHSEEFEEGRDQTTSDQSNEFGIFNSLWFSLGAFMQQGCDISPRSLSGRIVGGVWWFFTLIIISSYTANLAAFLTVERMVSPIESAEDLAKQTEIAYGTLEAGSTKEFFRRSKIAVFEKMWTYMKSAEPSVFVRTTEEGMIRVRKSKGKYAYLLESTMNEYIEQRKPCDTMKVGGNLDSKGYGIATPKGSALRGPVNLAVLKLSEQGVLDKLKSKWWYDKGECGSKDSGSKDKTSALSLSNVAGVFYILIGGLGLAMLVALIEFCYKSRSESKRMKGFCLIPQQSINEAIRTSTLPRNSGAGASGGSGSGENGRVVSQDFPKSMQSIPCMSHSSGMPLGATGL.

Residues 1–18 (MPYIFAFFCTGFLGAVVG) form the signal peptide. Residues 19–536 (ANFPNNIQIG…GVFSFLDPLA (518 aa)) are Extracellular-facing. 6 N-linked (GlcNAc...) asparagine glycosylation sites follow: N63, N249, N257, N363, N401, and N406. An intrachain disulfide couples C75 to C323. L-glutamate contacts are provided by P492, T494, and R499. The helical transmembrane segment at 537–557 (YEIWMCIVFAYIGVSVVLFLV) threads the bilayer. The Cytoplasmic portion of the chain corresponds to 558–584 (SRFSPYEWHSEEFEEGRDQTTSDQSNE). The segment at residues 585 to 600 (FGIFNSLWFSLGAFMQ) is an intramembrane region (helical; Pore-forming). Residues 601 to 603 (QGC) lie within the membrane without spanning it. C603 is lipidated: S-palmitoyl cysteine. Over 604–609 (DISPRS) the chain is Cytoplasmic. Residues 610–630 (LSGRIVGGVWWFFTLIIISSY) form a helical membrane-spanning segment. Over 631-805 (TANLAAFLTV…DKTSALSLSN (175 aa)) the chain is Extracellular. S645 carries the post-translational modification Phosphoserine. L-glutamate contacts are provided by S668 and T669. S710 bears the Phosphoserine mark. E719 provides a ligand contact to L-glutamate. C732 and C787 form a disulfide bridge. The helical transmembrane segment at 806-826 (VAGVFYILIGGLGLAMLVALI) threads the bilayer. Residues 827-907 (EFCYKSRSES…SGMPLGATGL (81 aa)) lie on the Cytoplasmic side of the membrane. C829 carries S-palmitoyl cysteine lipidation. Residues S849 and S863 each carry the phosphoserine modification. The disordered stretch occupies residues 857–881 (STLPRNSGAGASGGSGSGENGRVVS). The span at 866–875 (GASGGSGSGE) shows a compositional bias: gly residues. A PDZ-binding motif is present at residues 904–907 (ATGL).

The protein belongs to the glutamate-gated ion channel (TC 1.A.10.1) family. GRIA1 subfamily. In terms of assembly, homotetramer or heterotetramer of pore-forming glutamate receptor subunits. Heteromeric assembly can be the result of both receptor subtype and flip or flop form and according the composition, one partner can be dominant with respect to the fast desensitizing current component, whereas the other can determine the steady-state component. Tetramers may be formed by the dimerization of dimers. Found in a complex with GRIA2, GRIA3, GRIA4, CNIH2, CNIH3, CACNG2, CACNG3, CACNG4, CACNG5, CACNG7 and CACNG8. Interacts with HIP1 and RASGRF2. Interacts with SYNDIG1 and GRIA2. Interacts with DLG1 (via C-terminus). Interacts with LRFN1. Interacts with PRKG2. Interacts with CNIH2 and CACNG2. Interacts with CACNG5; this interaction modulates the gating. Interacts (via C-terminus) with PDLIM4 (via LIM domain); this interaction as well as the interaction of PDLIM4 with alpha-actinin is required for their colocalization in early endosomes. Interacts with SNX27 (via PDZ domain); the interaction is required for recycling to the plasma membrane when endocytosed and prevent degradation in lysosomes. Interacts (via PDZ-binding motif) with SHANK3 (via PDZ domain). Interacts with CACNG3; associates GRIA1 with the adapter protein complex 4 (AP-4) to target GRIA1 to the somatodendritic compartment of neurons. Interacts with CACNG2; this interaction mediates traffick to the plasma membrane and modulation of desensitization. Interacts with CNIH2 and CNIH3; this interaction promotes expression at the plasma membrane and extensively modulates their gating properties by slowing deactivation and desensitization kinetics. Found in a complex with GRIA2, GRIA3, GRIA4, DLG4, CACNG8 and CNIH2. Post-translationally, phosphorylated at Ser-645. Phosphorylated at Ser-710 by PKC. Phosphorylated at Ser-849 by PKC, PKA and CAMK2. Phosphorylated at Ser-863 by PKC, PKA and PRKG2. Phosphorylation of Ser-863 is reduced by induction of long-term depression and increased by induction of long-term potentiation. In terms of processing, palmitoylated. Depalmitoylated by CPT1C and upon L-glutamate stimulation. ZDHHC3/GODZ specifically palmitoylates Cys-603, which leads to Golgi retention and decreased cell surface expression. In contrast, Cys-829 palmitoylation does not affect cell surface expression but regulates stimulation-dependent endocytosis. Expressed in the outer plexiform layer of the retina of the eye (at protein level). Expressed in the forebrain and hippocampus (at protein level).

It is found in the cell membrane. The protein resides in the endoplasmic reticulum membrane. Its subcellular location is the postsynaptic cell membrane. The protein localises to the postsynaptic density membrane. It localises to the cell projection. It is found in the dendrite. The protein resides in the dendritic spine. Its subcellular location is the early endosome membrane. The protein localises to the recycling endosome membrane. It localises to the presynapse. It is found in the synapse. It catalyses the reaction Ca(2+)(in) = Ca(2+)(out). The catalysed reaction is Na(+)(in) = Na(+)(out). It carries out the reaction Mg(2+)(in) = Mg(2+)(out). The enzyme catalyses Li(+)(in) = Li(+)(out). It catalyses the reaction K(+)(in) = K(+)(out). The catalysed reaction is Sr(2+)(in) = Sr(2+)(out). Ionotropic glutamate receptor that functions as a ligand-gated cation channel, gated by L-glutamate and glutamatergic agonists such as alpha-amino-3-hydroxy-5-methyl-4-isoxazolepropionic acid (AMPA), quisqualic acid, and kainic acid. L-glutamate acts as an excitatory neurotransmitter at many synapses in the central nervous system. Binding of the excitatory neurotransmitter L-glutamate induces a conformation change, leading to the opening of the cation channel, and thereby converts the chemical signal to an electrical impulse upon entry of monovalent and divalent cations such as sodium and calcium. The receptor then desensitizes rapidly and enters in a transient inactive state, characterized by the presence of bound agonist. In the presence of CACNG2 or CACNG4 or CACNG7 or CACNG8, shows resensitization which is characterized by a delayed accumulation of current flux upon continued application of L-glutamate. Calcium (Ca(2+)) permeability depends on subunits composition and, heteromeric channels containing edited GRIA2 subunit are calcium-impermeable. Also permeable to other divalents cations such as strontium(2+) and magnesium(2+) and monovalent cations such as potassium(1+) and lithium(1+). This is Glutamate receptor 1 from Mus musculus (Mouse).